A 366-amino-acid polypeptide reads, in one-letter code: Bacteriochlorophyll a protein (366 aa).

Bacteriochlorophyll a contacts are provided by His111, His146, His290, His297, and His298.

As to quaternary structure, homotrimer. Each subunit contains 7 molecules of bacteriochlorophyll a.

Intermediary in the transfer of excitation energy from the chlorophyll to the reaction centers. The protein is Bacteriochlorophyll a protein (fmoA) of Chlorobaculum tepidum (strain ATCC 49652 / DSM 12025 / NBRC 103806 / TLS) (Chlorobium tepidum).